Consider the following 89-residue polypeptide: Large ribosomal subunit protein bL31B (89 aa).

This sequence belongs to the bacterial ribosomal protein bL31 family. Type B subfamily. As to quaternary structure, part of the 50S ribosomal subunit.

In Aeromonas salmonicida (strain A449), this protein is Large ribosomal subunit protein bL31B.